The primary structure comprises 556 residues: 2-succinyl-5-enolpyruvyl-6-hydroxy-3-cyclohexene-1-carboxylate synthase (556 aa).

Belongs to the TPP enzyme family. MenD subfamily. Homodimer. It depends on Mg(2+) as a cofactor. Mn(2+) serves as cofactor. Requires thiamine diphosphate as cofactor.

The enzyme catalyses isochorismate + 2-oxoglutarate + H(+) = 5-enolpyruvoyl-6-hydroxy-2-succinyl-cyclohex-3-ene-1-carboxylate + CO2. The protein operates within quinol/quinone metabolism; 1,4-dihydroxy-2-naphthoate biosynthesis; 1,4-dihydroxy-2-naphthoate from chorismate: step 2/7. Its pathway is quinol/quinone metabolism; menaquinone biosynthesis. Functionally, catalyzes the thiamine diphosphate-dependent decarboxylation of 2-oxoglutarate and the subsequent addition of the resulting succinic semialdehyde-thiamine pyrophosphate anion to isochorismate to yield 2-succinyl-5-enolpyruvyl-6-hydroxy-3-cyclohexene-1-carboxylate (SEPHCHC). The protein is 2-succinyl-5-enolpyruvyl-6-hydroxy-3-cyclohexene-1-carboxylate synthase of Salmonella paratyphi C (strain RKS4594).